Reading from the N-terminus, the 156-residue chain is SsrA-binding protein (156 aa).

Positions 131 to 156 (YDKRQTLREQQDKREALRVMRERNRG) are disordered.

Belongs to the SmpB family.

Its subcellular location is the cytoplasm. Its function is as follows. Required for rescue of stalled ribosomes mediated by trans-translation. Binds to transfer-messenger RNA (tmRNA), required for stable association of tmRNA with ribosomes. tmRNA and SmpB together mimic tRNA shape, replacing the anticodon stem-loop with SmpB. tmRNA is encoded by the ssrA gene; the 2 termini fold to resemble tRNA(Ala) and it encodes a 'tag peptide', a short internal open reading frame. During trans-translation Ala-aminoacylated tmRNA acts like a tRNA, entering the A-site of stalled ribosomes, displacing the stalled mRNA. The ribosome then switches to translate the ORF on the tmRNA; the nascent peptide is terminated with the 'tag peptide' encoded by the tmRNA and targeted for degradation. The ribosome is freed to recommence translation, which seems to be the essential function of trans-translation. The protein is SsrA-binding protein of Arthrobacter sp. (strain FB24).